The chain runs to 527 residues: Protein SDS24 (527 aa).

Low complexity-rich tracts occupy residues 1–22 (MAST…LPTS) and 55–74 (TPPT…TPAP). The disordered stretch occupies residues 1–75 (MASTSNTFPP…PGCAATPAPL (75 aa)). Phosphoserine is present on S94. CBS domains lie at 114–175 (IEQN…KITV), 198–256 (LTPK…NARS), 283–342 (TSRQ…QYPL), and 443–512 (LNSH…GNKE). A compositionally biased stretch (low complexity) spans 424–447 (AQSSANGATPMSKSSSSTSLNSHS). Disordered stretches follow at residues 424-478 (AQSS…TNTP) and 508-527 (TGNK…SIAM). A phosphoserine mark is found at S458 and S524.

This sequence belongs to the SDS23 family.

Its subcellular location is the cytoplasm. The protein resides in the nucleus. In terms of biological role, involved in DNA replication and cell separation during budding. This chain is Protein SDS24 (SDS24), found in Saccharomyces cerevisiae (strain YJM789) (Baker's yeast).